A 136-amino-acid chain; its full sequence is Nucleoside diphosphate kinase (136 aa).

ATP-binding residues include Lys10, Phe58, Arg86, Thr92, Arg104, and Asn114. Residue His117 is the Pros-phosphohistidine intermediate of the active site.

Belongs to the NDK family. As to quaternary structure, homotetramer. Requires Mg(2+) as cofactor.

It is found in the cytoplasm. It catalyses the reaction a 2'-deoxyribonucleoside 5'-diphosphate + ATP = a 2'-deoxyribonucleoside 5'-triphosphate + ADP. The catalysed reaction is a ribonucleoside 5'-diphosphate + ATP = a ribonucleoside 5'-triphosphate + ADP. Major role in the synthesis of nucleoside triphosphates other than ATP. The ATP gamma phosphate is transferred to the NDP beta phosphate via a ping-pong mechanism, using a phosphorylated active-site intermediate. This Mycobacterium sp. (strain MCS) protein is Nucleoside diphosphate kinase.